A 203-amino-acid chain; its full sequence is N-(5'-phosphoribosyl)anthranilate isomerase (203 aa).

The protein belongs to the TrpF family.

It carries out the reaction N-(5-phospho-beta-D-ribosyl)anthranilate = 1-(2-carboxyphenylamino)-1-deoxy-D-ribulose 5-phosphate. It functions in the pathway amino-acid biosynthesis; L-tryptophan biosynthesis; L-tryptophan from chorismate: step 3/5. This Geotalea uraniireducens (strain Rf4) (Geobacter uraniireducens) protein is N-(5'-phosphoribosyl)anthranilate isomerase.